Reading from the N-terminus, the 551-residue chain is Bestrophin-1 (551 aa).

The Cytoplasmic portion of the chain corresponds to 1–31 (MTITYTNKVANARLGSFSSLLLCWRGSIYKL). A Ca(2+)-binding site is contributed by A10. The helical transmembrane segment at 32–51 (LYGEFLVFIFLYYSIRGLYR) threads the bilayer. Residues 52-60 (MVLSSDQQL) lie on the Extracellular side of the membrane. A helical transmembrane segment spans residues 61–82 (LFEKLALYCDSYIQLIPISFVL). Over 83–237 (GFYVTLVVSR…DWISIPLVYT (155 aa)) the chain is Cytoplasmic. A helical transmembrane segment spans residues 238–255 (QVVTVAVYSFFLACLIGR). Topologically, residues 256–274 (QFLNPNKDYPGHEMDLVVP) are extracellular. The chain crosses the membrane as a helical span at residues 275–288 (VFTILQFLFYMGWL). Residues 289 to 551 (KVAEQLINPF…EAGTKPVLYE (263 aa)) lie on the Cytoplasmic side of the membrane. Positions 293, 296, 301, and 304 each coordinate Ca(2+). The tract at residues 346 to 379 (PYTAASARSRRHSFMGSTFNISLKKEDLELWSKE) is auto-inhibitory segment. The segment at 459–489 (SHCGPQAPSSHPTEQSAPSSSDTGDGPSTDY) is disordered. The span at 465–475 (APSSHPTEQSA) shows a compositional bias: polar residues. Positions 476-488 (PSSSDTGDGPSTD) are enriched in low complexity.

Belongs to the anion channel-forming bestrophin (TC 1.A.46) family. Calcium-sensitive chloride channel subfamily. As to quaternary structure, interacts with YWHAG; this interaction promotes the ligand-gated L-glutamate channel activity leading to the positive regulation of NMDA glutamate receptor activity through the L-glutamate secretion.

It localises to the cell membrane. Its subcellular location is the basolateral cell membrane. It carries out the reaction 4-aminobutanoate(in) = 4-aminobutanoate(out). The catalysed reaction is L-glutamate(out) = L-glutamate(in). It catalyses the reaction chloride(in) = chloride(out). The enzyme catalyses hydrogencarbonate(in) = hydrogencarbonate(out). It carries out the reaction D-serine(in) = D-serine(out). With respect to regulation, inactivated by sulfhydryl-reactive agents. Ligand-gated anion channel that allows the movement of anions across cell membranes when activated by calcium (Ca2+). Allows the movement of chloride and hydrogencarbonate. Found in a partially open conformation leading to significantly smaller chloride movement. Upon F2R/PAR-1 activation, the sequestered calcium is released into the cytosol of astrocytes, leading to the (Ca2+)-dependent release of L-glutamate into the synaptic cleft that targets the neuronal postsynaptic GRIN2A/NMDAR receptor resulting in the synaptic plasticity regulation. Upon activation of the norepinephrine-alpha-1 adrenergic receptor signaling pathway, transports as well D-serine than L-glutamate in a (Ca2+)-dependent manner, leading to activation of adjacent NMDAR receptors and therefore regulates the heterosynaptic long-term depression and metaplasticity during initial memory acquisition. Releases the 4-aminobutanoate neurotransmitter in a (Ca2+)-dependent manner, and participates in its tonic release from cerebellar glial cells. This Mus musculus (Mouse) protein is Bestrophin-1.